Consider the following 201-residue polypeptide: Large ribosomal subunit protein uL4 (201 aa).

Positions 39 to 72 (KRQGTSAQKSRSEVIGSGKKPWRQKGTGRARAGS) are disordered.

This sequence belongs to the universal ribosomal protein uL4 family. Part of the 50S ribosomal subunit.

In terms of biological role, one of the primary rRNA binding proteins, this protein initially binds near the 5'-end of the 23S rRNA. It is important during the early stages of 50S assembly. It makes multiple contacts with different domains of the 23S rRNA in the assembled 50S subunit and ribosome. Its function is as follows. Forms part of the polypeptide exit tunnel. The protein is Large ribosomal subunit protein uL4 of Wigglesworthia glossinidia brevipalpis.